A 393-amino-acid chain; its full sequence is Protein TsgA (393 aa).

A run of 12 helical transmembrane segments spans residues 11–31 (WISF…GMVM), 51–71 (FLNA…EIVP), 78–98 (FGFL…SLAL), 101–121 (AAMF…TFLV), 134–154 (LLFT…IAAF), 162–182 (WYWV…LTFG), 206–226 (IGVL…LGFI), 245–265 (TLVS…SFIL), 273–293 (ILTV…TGTP), 297–317 (AWSI…IITL), 332–352 (FVLT…GPIV), and 361–381 (LLTA…LGFV).

This sequence belongs to the major facilitator superfamily. TsgA family.

Its subcellular location is the cell inner membrane. The sequence is that of Protein TsgA from Escherichia coli O6:K15:H31 (strain 536 / UPEC).